A 427-amino-acid chain; its full sequence is 4-hydroxy-3-methylbut-2-en-1-yl diphosphate synthase (flavodoxin) (427 aa).

Cys300, Cys303, Cys346, and Glu353 together coordinate [4Fe-4S] cluster.

Belongs to the IspG family. [4Fe-4S] cluster serves as cofactor.

It carries out the reaction (2E)-4-hydroxy-3-methylbut-2-enyl diphosphate + oxidized [flavodoxin] + H2O + 2 H(+) = 2-C-methyl-D-erythritol 2,4-cyclic diphosphate + reduced [flavodoxin]. The protein operates within isoprenoid biosynthesis; isopentenyl diphosphate biosynthesis via DXP pathway; isopentenyl diphosphate from 1-deoxy-D-xylulose 5-phosphate: step 5/6. Functionally, converts 2C-methyl-D-erythritol 2,4-cyclodiphosphate (ME-2,4cPP) into 1-hydroxy-2-methyl-2-(E)-butenyl 4-diphosphate. This chain is 4-hydroxy-3-methylbut-2-en-1-yl diphosphate synthase (flavodoxin), found in Chromobacterium violaceum (strain ATCC 12472 / DSM 30191 / JCM 1249 / CCUG 213 / NBRC 12614 / NCIMB 9131 / NCTC 9757 / MK).